We begin with the raw amino-acid sequence, 266 residues long: Protein YdcF (266 aa).

The protein to S.coelicolor SCO4629. As to quaternary structure, monomer.

Binds S-adenosyl-L-methionine (AdoMet). The protein is Protein YdcF (ydcF) of Escherichia coli (strain K12).